We begin with the raw amino-acid sequence, 377 residues long: Dihydroorotase, mitochondrial (377 aa).

Residues His-44, His-46, Lys-130, His-168, and His-206 each contribute to the Zn(2+) site. Position 130 is an N6-carboxylysine (Lys-130). Residue Ser-223 is modified to Phosphoserine. Asp-280 is a binding site for Zn(2+).

Belongs to the metallo-dependent hydrolases superfamily. DHOase family. Class II DHOase subfamily. It depends on Zn(2+) as a cofactor.

The protein resides in the mitochondrion. It carries out the reaction (S)-dihydroorotate + H2O = N-carbamoyl-L-aspartate + H(+). It participates in pyrimidine metabolism; UMP biosynthesis via de novo pathway; (S)-dihydroorotate from bicarbonate: step 3/3. In Arabidopsis thaliana (Mouse-ear cress), this protein is Dihydroorotase, mitochondrial (PYR4).